A 599-amino-acid chain; its full sequence is Elongation factor 4 (599 aa).

A tr-type G domain is found at serine 5 to threonine 187. GTP is bound by residues aspartate 17–threonine 22 and asparagine 134–aspartate 137.

Belongs to the TRAFAC class translation factor GTPase superfamily. Classic translation factor GTPase family. LepA subfamily.

The protein resides in the cell inner membrane. It carries out the reaction GTP + H2O = GDP + phosphate + H(+). Required for accurate and efficient protein synthesis under certain stress conditions. May act as a fidelity factor of the translation reaction, by catalyzing a one-codon backward translocation of tRNAs on improperly translocated ribosomes. Back-translocation proceeds from a post-translocation (POST) complex to a pre-translocation (PRE) complex, thus giving elongation factor G a second chance to translocate the tRNAs correctly. Binds to ribosomes in a GTP-dependent manner. In Pseudomonas fluorescens (strain ATCC BAA-477 / NRRL B-23932 / Pf-5), this protein is Elongation factor 4.